The chain runs to 285 residues: Phospholipid phosphatase 1 (285 aa).

Topologically, residues 1-6 are cytoplasmic; sequence MFDKTR. The PDZ-binding; involved in localization to the apical cell membrane signature appears at 5-7; the sequence is TRL. A helical membrane pass occupies residues 7-27; sequence LPYVALDVLCVLLAGLPFAIL. Topologically, residues 28-53 are extracellular; the sequence is TSRHTPFQRGLFCNDESIKYPYKEDT. Residues 54 to 74 form a helical membrane-spanning segment; the sequence is IPYPLLGGIIIPFSIIVMIVG. The Cytoplasmic segment spans residues 75 to 94; the sequence is ETLSVYFNLLHSNSFIRNNY. Residues 95 to 115 traverse the membrane as a helical segment; it reads IATIYKAIGTFLFGAAASQSL. Residues 116 to 164 lie on the Extracellular side of the membrane; it reads TDIAKYSIGRLRPHFLDVCDPDWSKINCSDGYIENYICRGNAQKVKEGR. The segment at 120–128 is phosphatase sequence motif I; that stretch reads KYSIGRLRP. N-linked (GlcNAc...) asparagine glycosylation occurs at asparagine 142. A helical membrane pass occupies residues 165–185; that stretch reads LSFYSGHSSFSMYCMLFVALY. Residues 168–171 are phosphatase sequence motif II; it reads YSGH. The active-site Proton donors is the histidine 171. Topologically, residues 186-196 are cytoplasmic; it reads LQARMKGDWAR. A helical membrane pass occupies residues 197–216; sequence LLRPTLQFGLVAVSIYVGLS. Positions 216–227 are phosphatase sequence motif III; the sequence is SRVSDYKHHWSD. Residues 217 to 229 lie on the Extracellular side of the membrane; it reads RVSDYKHHWSDVL. Histidine 223 acts as the Nucleophile in catalysis. A helical membrane pass occupies residues 230–250; that stretch reads TGLIQGALVAIVVAVYVSDFF. Residues 251–285 are Cytoplasmic-facing; sequence KERNSPFKERKEEDSHTTLHETPTTGNHYRNSHQP. The segment covering 257 to 269 has biased composition (basic and acidic residues); the sequence is FKERKEEDSHTTL. Positions 257-285 are disordered; the sequence is FKERKEEDSHTTLHETPTTGNHYRNSHQP. Residues 270–285 are compositionally biased toward polar residues; that stretch reads HETPTTGNHYRNSHQP.

It belongs to the PA-phosphatase related phosphoesterase family. In terms of assembly, forms functional homodimers and homooligomers that are not required for substrate recognition and catalytic activity. Can also form heterooligomers with PLPP2 and PLPP3. N-glycosylated. N-linked sugars are of the complex type. N-glycosylation is not required for the phosphatase activity.

Its subcellular location is the cell membrane. The protein resides in the apical cell membrane. The protein localises to the membrane raft. It localises to the membrane. It is found in the caveola. The catalysed reaction is a 1,2-diacyl-sn-glycero-3-phosphate + H2O = a 1,2-diacyl-sn-glycerol + phosphate. It catalyses the reaction 1,2-dihexadecanoyl-sn-glycero-3-phosphate + H2O = 1,2-dihexadecanoyl-sn-glycerol + phosphate. It carries out the reaction 1,2-di-(9Z-octadecenoyl)-sn-glycero-3-phosphate + H2O = 1,2-di-(9Z-octadecenoyl)-sn-glycerol + phosphate. The enzyme catalyses a monoacyl-sn-glycero-3-phosphate + H2O = a monoacylglycerol + phosphate. The catalysed reaction is (9Z)-octadecenoyl-sn-glycero-3-phosphate + H2O = (9Z-octadecenoyl)-glycerol + phosphate. It catalyses the reaction a 1-acyl-sn-glycero-3-phosphate + H2O = a 1-acyl-sn-glycerol + phosphate. It carries out the reaction 1-(9Z-octadecenoyl)-sn-glycero-3-phosphate + H2O = 1-(9Z-octadecenoyl)-sn-glycerol + phosphate. The enzyme catalyses a 1,2-diacyl-sn-glycerol 3-diphosphate + H2O = a 1,2-diacyl-sn-glycero-3-phosphate + phosphate + H(+). The catalysed reaction is sphing-4-enine 1-phosphate + H2O = sphing-4-enine + phosphate. It catalyses the reaction an N-acylsphing-4-enine 1-phosphate + H2O = an N-acylsphing-4-enine + phosphate. It carries out the reaction N-(octanoyl)-sphing-4-enine-1-phosphate + H2O = N-octanoylsphing-4-enine + phosphate. The enzyme catalyses N-(9Z-octadecenoyl)-ethanolamine phosphate + H2O = N-(9Z-octadecenoyl) ethanolamine + phosphate. The catalysed reaction is 1-hexadecanoyl-2-(9Z-octadecenoyl)-sn-glycero-3-phosphate + H2O = 1-hexadecanoyl-2-(9Z-octadecenoyl)-sn-glycerol + phosphate. It functions in the pathway lipid metabolism; phospholipid metabolism. Magnesium-independent phospholipid phosphatase. Insensitive to N-ethylmaleimide. Functionally, magnesium-independent phospholipid phosphatase of the plasma membrane that catalyzes the dephosphorylation of a variety of glycerolipid and sphingolipid phosphate esters including phosphatidate/PA, lysophosphatidate/LPA, diacylglycerol pyrophosphate/DGPP, sphingosine 1-phosphate/S1P and ceramide 1-phosphate/C1P. Also acts on N-oleoyl ethanolamine phosphate/N-(9Z-octadecenoyl)-ethanolamine phosphate, a potential physiological compound. Through its extracellular phosphatase activity allows both the hydrolysis and the cellular uptake of these bioactive lipid mediators from the milieu, regulating signal transduction in different cellular processes. It is for instance essential for the extracellular hydrolysis of S1P and subsequent conversion into intracellular S1P. Involved in the regulation of inflammation, platelets activation, cell proliferation and migration among other processes. May also have an intracellular activity to regulate phospholipid-mediated signaling pathways. The polypeptide is Phospholipid phosphatase 1 (Sus scrofa (Pig)).